The sequence spans 746 residues: NAD(P)H-quinone oxidoreductase subunit 5, chloroplastic (746 aa).

The next 16 helical transmembrane spans lie at 9–29 (YIIL…LLFV), 40–60 (WAFV…NLAI), 88–108 (LIDP…IMVL), 125–145 (FAYM…SNLI), 147–167 (IHIF…FWFT), 185–205 (GDFG…SLEF), 225–245 (FAIL…AQFP), 258–278 (TPIS…FLVA), 283–303 (LFIV…ITLL), 327–347 (LGYI…FHLI), 354–374 (ALLF…VGYS), 396–416 (TTFL…CFWS), 425–445 (WLYS…TAFY), 554–574 (LFPL…GIPF), 610–630 (IFSV…YGSV), and 726–746 (YLFL…YFDF).

Belongs to the complex I subunit 5 family. NDH is composed of at least 16 different subunits, 5 of which are encoded in the nucleus.

It localises to the plastid. The protein resides in the chloroplast thylakoid membrane. It catalyses the reaction a plastoquinone + NADH + (n+1) H(+)(in) = a plastoquinol + NAD(+) + n H(+)(out). It carries out the reaction a plastoquinone + NADPH + (n+1) H(+)(in) = a plastoquinol + NADP(+) + n H(+)(out). In terms of biological role, NDH shuttles electrons from NAD(P)H:plastoquinone, via FMN and iron-sulfur (Fe-S) centers, to quinones in the photosynthetic chain and possibly in a chloroplast respiratory chain. The immediate electron acceptor for the enzyme in this species is believed to be plastoquinone. Couples the redox reaction to proton translocation, and thus conserves the redox energy in a proton gradient. The chain is NAD(P)H-quinone oxidoreductase subunit 5, chloroplastic (ndhF) from Dioscorea elephantipes (Elephant's foot yam).